A 370-amino-acid chain; its full sequence is DNA primase small subunit PriS (370 aa).

Catalysis depends on residues D92, D94, and D272.

It belongs to the eukaryotic-type primase small subunit family. Heterodimer of a small subunit (PriS) and a large subunit (PriL). It depends on Mg(2+) as a cofactor. Mn(2+) is required as a cofactor.

In terms of biological role, catalytic subunit of DNA primase, an RNA polymerase that catalyzes the synthesis of short RNA molecules used as primers for DNA polymerase during DNA replication. The small subunit contains the primase catalytic core and has DNA synthesis activity on its own. Binding to the large subunit stabilizes and modulates the activity, increasing the rate of DNA synthesis while decreasing the length of the DNA fragments, and conferring RNA synthesis capability. The DNA polymerase activity may enable DNA primase to also catalyze primer extension after primer synthesis. May also play a role in DNA repair. In Picrophilus torridus (strain ATCC 700027 / DSM 9790 / JCM 10055 / NBRC 100828 / KAW 2/3), this protein is DNA primase small subunit PriS.